We begin with the raw amino-acid sequence, 147 residues long: Cyanate hydratase (147 aa).

Active-site residues include R88, E91, and S114.

This sequence belongs to the cyanase family.

It carries out the reaction cyanate + hydrogencarbonate + 3 H(+) = NH4(+) + 2 CO2. Functionally, catalyzes the reaction of cyanate with bicarbonate to produce ammonia and carbon dioxide. The chain is Cyanate hydratase from Methylibium petroleiphilum (strain ATCC BAA-1232 / LMG 22953 / PM1).